A 156-amino-acid polypeptide reads, in one-letter code: Transcriptional repressor NrdR (156 aa).

The segment at Cys-3–Cys-34 is a zinc-finger region. The ATP-cone domain occupies Leu-46–Asp-136.

Belongs to the NrdR family. Zn(2+) serves as cofactor.

In terms of biological role, negatively regulates transcription of bacterial ribonucleotide reductase nrd genes and operons by binding to NrdR-boxes. This chain is Transcriptional repressor NrdR, found in Corynebacterium efficiens (strain DSM 44549 / YS-314 / AJ 12310 / JCM 11189 / NBRC 100395).